Consider the following 219-residue polypeptide: Claudin-3 (219 aa).

At 1-8 (MSMGLEIT) the chain is on the cytoplasmic side. A helical membrane pass occupies residues 9-29 (GTSLAVLGWLCTIVCCALPMW). The Extracellular segment spans residues 30–80 (RVSAFIGSSIITAQITWEGLWMNCVVQSTGQMQCKMYDSLLALPQDLQAAR). A helical membrane pass occupies residues 81–101 (ALIVVSILLAAFGLLVALVGA). At 102–115 (QCTNCVQDETAKAK) the chain is on the cytoplasmic side. A helical membrane pass occupies residues 116–136 (ITIVAGVLFLLAAVLTLVPVS). The Extracellular segment spans residues 137-161 (WSANTIIRDFYNPLVPEAQKREMGT). The chain crosses the membrane as a helical span at residues 162–182 (GLYVGWAAAALQLLGGALLCC). Residues 183–219 (SCPPREKYAPTKILYSAPRSTGPGTGTGTAYDRKDYV) are Cytoplasmic-facing. Phosphotyrosine is present on Tyr-197. Ser-198 is modified (phosphoserine). An interactions with TJP1, TJP2 and TJP3 region spans residues 218–219 (YV).

The protein belongs to the claudin family. Can form homo- and heteropolymers with other CLDN. Homopolymers interact with CLDN1 and CLDN2 homopolymers. Interacts in cis (within the same plasma membrane) with CLDN19. Directly interacts with TJP1/ZO-1, TJP2/ZO-2 and TJP3/ZO-3.

It localises to the cell junction. The protein localises to the tight junction. Its subcellular location is the cell membrane. In terms of biological role, plays a major role in tight junction-specific obliteration of the intercellular space, through calcium-independent cell-adhesion activity. The chain is Claudin-3 (Cldn3) from Rattus norvegicus (Rat).